The primary structure comprises 365 residues: MAPCTLWRCCQRTVGWVPVLFITFVVVWSYYAYVVELCVFTLSGNGENGKAVVYLVAFHLFFVMFVWSYWMTIFTSPASPSKEFCLSNSEKERYEKEFSQERQQEILRRAARDLPIYTTSASKTVRYCERCQLIKPDRAHHCSACDMCILKMDHHCPWVNNCVGFSNYKFFLLFLFYSLLYCLFVATTVLQYFIKFWTNELTDTRAKFHVLFLFFVSTMFFISVLSLLSYHCWLVGKNRTTIESFRAPMFSYGTDGNGFSLGCSKNWRQVFGDEKKYWLLPVFSSQGDGCSFPTRLVGTDPEQASVSNQSESARSIGSNQPFPIKPLSESKNRLLDSDPQWLESGSEEGVGGSGTNNHVTVAIEN.

At 1–14 the chain is on the cytoplasmic side; sequence MAPCTLWRCCQRTV. A helical membrane pass occupies residues 15–35; that stretch reads GWVPVLFITFVVVWSYYAYVV. Residues 36-53 lie on the Lumenal side of the membrane; that stretch reads ELCVFTLSGNGENGKAVV. The chain crosses the membrane as a helical span at residues 54–74; that stretch reads YLVAFHLFFVMFVWSYWMTIF. Topologically, residues 75 to 169 are cytoplasmic; that stretch reads TSPASPSKEF…NNCVGFSNYK (95 aa). The DHHC domain maps to 126-176; sequence RYCERCQLIKPDRAHHCSACDMCILKMDHHCPWVNNCVGFSNYKFFLLFLF. 2 residues coordinate Zn(2+): Cys128 and Cys131. Substrate contacts are provided by residues Lys135 and 140-143; that span reads HHCS. Zn(2+)-binding residues include His141, Cys142, Cys145, Cys148, and His155. The S-palmitoyl cysteine intermediate role is filled by Cys156. Cys162 contributes to the Zn(2+) binding site. The helical transmembrane segment at 170 to 190 threads the bilayer; it reads FFLLFLFYSLLYCLFVATTVL. Over 191–207 the chain is Lumenal; the sequence is QYFIKFWTNELTDTRAK. Residues 208–231 form a helical membrane-spanning segment; the sequence is FHVLFLFFVSTMFFISVLSLLSYH. Over 232–365 the chain is Cytoplasmic; it reads CWLVGKNRTT…NNHVTVAIEN (134 aa). The disordered stretch occupies residues 301–365; the sequence is PEQASVSNQS…NNHVTVAIEN (65 aa). Polar residues predominate over residues 302–321; it reads EQASVSNQSESARSIGSNQP. Ser305 and Ser330 each carry phosphoserine.

The protein belongs to the DHHC palmitoyltransferase family. In terms of processing, autopalmitoylated (in vitro).

The protein resides in the golgi apparatus membrane. Its subcellular location is the cell membrane. The protein localises to the cytoplasm. It is found in the perinuclear region. It localises to the endoplasmic reticulum membrane. The protein resides in the endoplasmic reticulum-Golgi intermediate compartment membrane. It carries out the reaction L-cysteinyl-[protein] + hexadecanoyl-CoA = S-hexadecanoyl-L-cysteinyl-[protein] + CoA. The enzyme catalyses L-cysteinyl-[protein] + tetradecanoyl-CoA = S-tetradecanoyl-L-cysteinyl-[protein] + CoA. It catalyses the reaction L-cysteinyl-[protein] + octadecanoyl-CoA = S-octadecanoyl-L-cysteinyl-[protein] + CoA. In terms of biological role, palmitoyltransferase that could catalyze the addition of palmitate onto various protein substrates. Catalyzes palmitoylation of Cys residues in the cytoplasmic C-terminus of EGFR, and modulates the duration of EGFR signaling by modulating palmitoylation-dependent EGFR internalization and degradation. Has a preference for acyl-CoA with C16 fatty acid chains. Can also utilize acyl-CoA with C14 and C18 fatty acid chains. May palmitoylate CALHM1 subunit of gustatory voltage-gated ion channels and modulate channel gating and kinetics. This chain is Palmitoyltransferase ZDHHC20, found in Bos taurus (Bovine).